A 409-amino-acid chain; its full sequence is Peptidase T (409 aa).

Histidine 78 lines the Zn(2+) pocket. Residue aspartate 80 is part of the active site. A Zn(2+)-binding site is contributed by aspartate 140. Catalysis depends on glutamate 173, which acts as the Proton acceptor. Zn(2+)-binding residues include glutamate 174, aspartate 196, and histidine 379.

It belongs to the peptidase M20B family. Zn(2+) is required as a cofactor.

Its subcellular location is the cytoplasm. It carries out the reaction Release of the N-terminal residue from a tripeptide.. In terms of biological role, cleaves the N-terminal amino acid of tripeptides. The protein is Peptidase T of Salmonella choleraesuis (strain SC-B67).